We begin with the raw amino-acid sequence, 167 residues long: Putative defense protein Hdd11-like (167 aa).

Positions 1 to 18 (MMFTYVVAVASVVALTSA) are cleaved as a signal peptide. The region spanning 19-167 (YPTGAPPSAC…ESAPVKVLSH (149 aa)) is the Reelin domain. The cysteines at positions 28 and 105 are disulfide-linked.

The protein belongs to the insect defense protein family. In larvae, high expression in the fat body and low expression in midgut, hemocytes and malpighian tubules. No expression in silkgland.

It localises to the secreted. In terms of biological role, may have antimicrobial activity. The sequence is that of Putative defense protein Hdd11-like from Samia ricini (Indian eri silkmoth).